A 120-amino-acid chain; its full sequence is Cytochrome c-550 (120 aa).

The chain crosses the membrane as a helical span at residues Pro-5–Val-25. Residues Lys-26–Lys-120 lie on the Periplasmic side of the membrane. 4 residues coordinate heme c: Cys-60, Cys-63, His-64, and Met-99.

Post-translationally, binds 1 heme c group covalently per subunit.

It localises to the cell membrane. Its function is as follows. Not essential for growth on minimal or rich media. This chain is Cytochrome c-550 (cccA), found in Bacillus subtilis (strain 168).